A 231-amino-acid chain; its full sequence is Regulatory factor X-associated protein (231 aa).

The segment at 1–163 (MEAQAVPEGS…GNVKLEESTD (163 aa)) is disordered. Positions 50-65 (ADAEDEAGDDDADLLD) are enriched in acidic residues. Residues 115-138 (KQRKPWMCKKHRNKMYKDKYKKKK) show a composition bias toward basic residues. The Nuclear localization signal signature appears at 123–138 (KKHRNKMYKDKYKKKK). Lys-157 is covalently cross-linked (Glycyl lysine isopeptide (Lys-Gly) (interchain with G-Cter in SUMO2)).

RFX consists of at least 3 different subunits; RFXAP, RFX5 and RFX-B/RFXANK; with each subunit representing a separate complementation group. RFX forms cooperative DNA binding complexes with X2BP and CBF/NF-Y. RFX associates with CIITA to form an active transcriptional complex. Post-translationally, phosphorylated.

It is found in the nucleus. In terms of biological role, part of the RFX complex that binds to the X-box of MHC II promoters. The sequence is that of Regulatory factor X-associated protein (Rfxap) from Mus musculus (Mouse).